Here is a 222-residue protein sequence, read N- to C-terminus: Proteoglycan 3 (222 aa).

The signal sequence occupies residues 1 to 17 (MKQPLILSFLLLGMVSA). Residues 27-46 (NPKREESLKQEADGSREQGR) are compositionally biased toward basic and acidic residues. The segment at 27–100 (NPKREESLKQ…PKEEDTTHFQ (74 aa)) is disordered. Residues 71 to 81 (FEDEEAMESDP) show a composition bias toward acidic residues. Residues 83–97 (ALNKDSACPKEEDTT) are compositionally biased toward basic and acidic residues. Residues 105 to 221 (CKSCNYVLVR…CKSHLPFICS (117 aa)) enclose the C-type lectin domain. 2 disulfide bridges follow: cysteine 126–cysteine 220 and cysteine 197–cysteine 212.

As to expression, expressed in bone marrow, spleen, and thymus. Not detected in heart, liver or lung.

In terms of biological role, possesses similar cytotoxic and cytostimulatory activities to PRG2/MBP. The chain is Proteoglycan 3 from Mus musculus (Mouse).